Here is a 254-residue protein sequence, read N- to C-terminus: Type III pantothenate kinase (254 aa).

7–14 (DIGNTRLK) provides a ligand contact to ATP. Substrate-binding positions include Y97 and 104–107 (GSDR). Residue D106 is the Proton acceptor of the active site. T134 contributes to the ATP binding site. T184 is a binding site for substrate.

Belongs to the type III pantothenate kinase family. As to quaternary structure, homodimer. Requires NH4(+) as cofactor. The cofactor is K(+).

Its subcellular location is the cytoplasm. The enzyme catalyses (R)-pantothenate + ATP = (R)-4'-phosphopantothenate + ADP + H(+). It participates in cofactor biosynthesis; coenzyme A biosynthesis; CoA from (R)-pantothenate: step 1/5. In terms of biological role, catalyzes the phosphorylation of pantothenate (Pan), the first step in CoA biosynthesis. The protein is Type III pantothenate kinase of Methylibium petroleiphilum (strain ATCC BAA-1232 / LMG 22953 / PM1).